Reading from the N-terminus, the 204-residue chain is NAD(P)H dehydrogenase (quinone) FQR1 (204 aa).

The 188-residue stretch at 5–192 folds into the Flavodoxin-like domain; it reads VYIVYYSMYG…QQAFHQGQYI (188 aa). Residues 11-15, 112-165, and His136 contribute to the FMN site; these read SMYGH and IFYS…SPYG. Position 13 (Tyr13) interacts with NAD(+).

This sequence belongs to the WrbA family. FMN is required as a cofactor.

Its subcellular location is the cell membrane. It carries out the reaction a quinone + NADH + H(+) = a quinol + NAD(+). It catalyses the reaction a quinone + NADPH + H(+) = a quinol + NADP(+). In terms of biological role, catalyzes the transfer of electrons from NADH and NADPH to several quinones in vitro. May act as detoxification enzyme, and protect against auxin-induced oxidative stress. This Arabidopsis thaliana (Mouse-ear cress) protein is NAD(P)H dehydrogenase (quinone) FQR1.